The sequence spans 1024 residues: E3 ISG15--protein ligase HERC5 (1024 aa).

Residues 1 to 13 (MERRSRRKSRRNG) are compositionally biased toward basic residues. Residues 1 to 28 (MERRSRRKSRRNGRSTAGKAAATQPAKS) form a disordered region. 5 RCC1 repeats span residues 96-155 (NMKI…ALSK), 156-208 (GGEL…ALSM), 209-260 (SGNI…LLTQ), 262-312 (GLLF…AYVS), and 314-364 (LGKV…LIMI). An HECT domain is found at 702–1024 (ENEDLRKELW…EAINNNRGFG (323 aa)). The active-site Glycyl thioester intermediate is cysteine 994.

(Microbial infection) Interacts with human cytomegalovirus protein UL26; this interaction inhibits global protein ISGylation. In terms of assembly, (Microbial infection) Interacts with Kaposi's sarcoma-associated herpesvirus protein v-IRF1; this interaction inhibits global protein ISGylation. As to quaternary structure, binds to CCNA1, CCNB1, CCND1 and CCNE1. Interacts with UBE2L6. Interacts with IRF3, this interaction is marginal in resting cells but enhanced upon viral infection. Interacts with influenza A virus NS1. ISGylated. Expressed in testis and to a lesser degree in brain, ovary and placenta. Found in most tissues at low levels.

Its subcellular location is the cytoplasm. It localises to the perinuclear region. Functionally, major E3 ligase for ISG15 conjugation. Acts as a positive regulator of innate antiviral response in cells induced by interferon. Functions as part of the ISGylation machinery that recognizes target proteins in a broad and relatively non-specific manner. Catalyzes ISGylation of IRF3 which results in sustained activation, it attenuates IRF3-PIN1 interaction, which antagonizes IRF3 ubiquitination and degradation, and boosts the antiviral response. Mediates ISGylation of the phosphatase PTEN leading to its degradation, thus alleviating its suppression of the PI3K-AKT signaling pathway and promoting the production of cytokines that facilitate bacterial clearance. Interferes with the function of key viral structural proteins such as ebolavirus structural protein VP40 or HIV-1 protein GAG. Catalyzes ISGylation of influenza A viral NS1 which attenuates virulence; ISGylated NS1 fails to form homodimers and thus to interact with its RNA targets. Catalyzes ISGylation of papillomavirus type 16 L1 protein which results in dominant-negative effect on virus infectivity. Physically associated with polyribosomes, broadly modifies newly synthesized proteins in a cotranslational manner. In an interferon-stimulated cell, newly translated viral proteins are primary targets of ISG15. Promotes parkin/PRKN ubiquitin E3 ligase activity by suppressing the intramolecular interaction that maintains its autoinhibited conformation. In terms of biological role, (Microbial infection) Functions as an E3 ligase for ISGylation of hepatitis B virus protein X leading to enhanced viral replication due to increased interferon resistance. This Homo sapiens (Human) protein is E3 ISG15--protein ligase HERC5 (HERC5).